Reading from the N-terminus, the 138-residue chain is uncharacterized protein (138 aa).

The protein resides in the plastid. It localises to the chloroplast. This is an uncharacterized protein from Chlorella vulgaris (Green alga).